Consider the following 1135-residue polypeptide: Topless-related protein 4 (1135 aa).

One can recognise a LisH domain in the interval 4–36; sequence LSRELVFLILQFLDEEKFKDTVHRLEKESGFFF. Residues 34 to 92 form the CTLH domain; sequence FFFNMRYFEDSVTAGEWDDVEKYLSGFTKVDDNRYSMKIFFEIRKQKYLEALDKKDHAK. At serine 214 the chain carries Phosphoserine. Residues 281–303 form a disordered region; it reads LKRERPRSPPTNSLSMDYQTADS. Positions 290–303 are enriched in polar residues; sequence PTNSLSMDYQTADS. WD repeat units follow at residues 355–395, 417–456, 462–503, 506–547, 550–593, 597–636, 638–680, 776–815, 843–881, 884–924, 927–966, and 1020–1059; these read SQGS…KLVS, EYTA…DLRN, AHAG…KLHT, GHEA…SRVD, APGR…VKRT, LGKR…LLSS, AAEG…RILH, LLPA…RNLL, NKED…TMTT, APPP…VKSK, GHQK…KQAS, and ESSG…LKCR. Positions 1095–1135 are disordered; it reads DGGVHVIEPPGPEGKWGISAPPENGAGPSVSSAPGSDQQPR. A compositionally biased stretch (low complexity) spans 1119 to 1135; it reads GAGPSVSSAPGSDQQPR.

Tetramer. Interacts with WUS (via the C-terminal domain). Interacts with SPL (via EAR motif). Interacts with SPEAR3/TIE1. Binds to and corepresses GAF1/IDD2 at the promoter of GA20OX2 gene.

Its subcellular location is the nucleus. In terms of biological role, transcription corepressor of Zinc finger transcription factors GAF1/IDD2 and ENY/IDD1 in regulation of gibberellin homeostasis and signaling. This is Topless-related protein 4 (TPR4) from Arabidopsis thaliana (Mouse-ear cress).